We begin with the raw amino-acid sequence, 664 residues long: CRISPR-associated DNA-binding protein Cas12m (664 aa).

The recognition domain (REC1-N) stretch occupies residues 1–137 (MKRVTITIDG…AKYRELIGSD (137 aa)). The tract at residues 138–212 (EETAQMDTEI…AAKDRIRAAG (75 aa)) is recognition domain (REC2). The tract at residues 213 to 270 (NDIENLEKDRQAAVIKAYNNSGLWWGNYNAVLESYKKARIKALKDGAELKYHRFDGSG) is recognition domain (REC1-C). The interval 271–390 (RFTNQIQGGM…VWSVVFTFTT (120 aa)) is wedge domain (WED). A linker region spans residues 391–404 (DCPTYDQRSSTGNR). The ruvC-I stretch occupies residues 405–618 (CGLNLGWKKQ…KNGTQIEQVS (214 aa)). The target nucleic-acid binding (TNB) stretch occupies residues 618–650 (STASSATCSACKGKMEQVDGIMWRCRECRALVD). Residues Cys-625, Cys-628, Cys-642, and Cys-645 each contribute to the Zn(2+) site. The ruvC-II stretch occupies residues 651-664 (QDINAAANLFREVL). Asp-652 contacts Mg(2+).

The protein belongs to the CRISPR-associated DNA-binding protein Cas12m family. Mg(2+) serves as cofactor. It depends on Zn(2+) as a cofactor.

Functionally, CRISPR (clustered regularly interspaced short palindromic repeat), is an adaptive immune system that provides protection against mobile genetic elements (viruses, transposable elements and conjugative plasmids). CRISPR clusters contain sequences complementary to antecedent mobile elements and target invading nucleic acids. CRISPR clusters are transcribed and processed into CRISPR RNA (crRNA). Recognizes a short motif in the CRISPR repeat sequences (the 5' PAM or protospacer adjacent motif, 5'-CCN-3' in this organism) to help distinguish self versus nonself, as targets within the bacterial CRISPR locus do not have PAMs. Cas12m-crRNA binds DNA in a PAM-dependent, crRNA-guided fashion. DNA-binding probably inhibits transcription, leading to gene silencing. Upon expression in E.coli as a CRISPR region preferentially binds to its associated crRNA. Probably required for pre-crRNA processing to mature crRNA. This Pelobacter propionicus (strain DSM 2379 / NBRC 103807 / OttBd1) protein is CRISPR-associated DNA-binding protein Cas12m.